Consider the following 553-residue polypeptide: Chaperonin GroEL 1 (553 aa).

ATP contacts are provided by residues 29–32 (TIGP), 86–90 (DGTTT), Gly413, 476–478 (NAL), and Asp492. A disordered region spans residues 520 to 543 (DKPEPPAPAGGGGDPMGGMGGMDP). The segment covering 528-543 (AGGGGDPMGGMGGMDP) has biased composition (gly residues).

The protein belongs to the chaperonin (HSP60) family. In terms of assembly, forms a cylinder of 14 subunits composed of two heptameric rings stacked back-to-back. Interacts with the co-chaperonin GroES.

The protein localises to the cytoplasm. It catalyses the reaction ATP + H2O + a folded polypeptide = ADP + phosphate + an unfolded polypeptide.. Its function is as follows. Together with its co-chaperonin GroES, plays an essential role in assisting protein folding. The GroEL-GroES system forms a nano-cage that allows encapsulation of the non-native substrate proteins and provides a physical environment optimized to promote and accelerate protein folding. The sequence is that of Chaperonin GroEL 1 from Synechococcus sp. (strain CC9311).